Here is a 188-residue protein sequence, read N- to C-terminus: Acireductone dioxygenase (188 aa).

The Fe(2+) site is built by His97, His99, Glu103, and His141. Positions 97, 99, 103, and 141 each coordinate Ni(2+).

This sequence belongs to the acireductone dioxygenase (ARD) family. Monomer. It depends on Fe(2+) as a cofactor. Ni(2+) is required as a cofactor.

It carries out the reaction 1,2-dihydroxy-5-(methylsulfanyl)pent-1-en-3-one + O2 = 3-(methylsulfanyl)propanoate + CO + formate + 2 H(+). It catalyses the reaction 1,2-dihydroxy-5-(methylsulfanyl)pent-1-en-3-one + O2 = 4-methylsulfanyl-2-oxobutanoate + formate + 2 H(+). Its pathway is amino-acid biosynthesis; L-methionine biosynthesis via salvage pathway; L-methionine from S-methyl-5-thio-alpha-D-ribose 1-phosphate: step 5/6. Its function is as follows. Catalyzes 2 different reactions between oxygen and the acireductone 1,2-dihydroxy-3-keto-5-methylthiopentene (DHK-MTPene) depending upon the metal bound in the active site. Fe-containing acireductone dioxygenase (Fe-ARD) produces formate and 2-keto-4-methylthiobutyrate (KMTB), the alpha-ketoacid precursor of methionine in the methionine recycle pathway. Ni-containing acireductone dioxygenase (Ni-ARD) produces methylthiopropionate, carbon monoxide and formate, and does not lie on the methionine recycle pathway. This chain is Acireductone dioxygenase, found in Gluconobacter oxydans (strain 621H) (Gluconobacter suboxydans).